The primary structure comprises 512 residues: Colistin resistance protein EmrB (512 aa).

Helical transmembrane passes span 17–37, 55–75, 84–104, 115–135, 144–164, 169–189, 205–225, 234–254, 280–300, 314–334, 341–361, 376–396, 412–432, and 486–506; these read WAIF…IQIV, VTWV…MSSI, VYYT…ALSW, IQGF…YLLF, LVMF…IGGW, FSWH…ATVI, SMDW…EYFL, LADT…MIFF, ITTF…PVFL, VMMV…WLIP, TVFV…HLSI, GIGL…TLPL, IGGA…TAMH, and FNDL…LTIF.

Belongs to the major facilitator superfamily. EmrB family.

Its subcellular location is the cell inner membrane. Probably part of an efflux pump system that contributes to adaptation to osmotic stress and resistance to colistin. The chain is Colistin resistance protein EmrB from Acinetobacter baumannii (strain ATCC 17978 / DSM 105126 / CIP 53.77 / LMG 1025 / NCDC KC755 / 5377).